The primary structure comprises 55 residues: Lantibiotic nisin-U (55 aa).

Residues 1-24 (MNNEDFNLDLIKISKENNSGASPR) constitute a propeptide that is removed on maturation. Thr-26 bears the 2,3-didehydrobutyrine mark. Positions 27-31 (SKSLC) form a cross-link, lanthionine (Ser-Cys). Ser-29 is modified (2,3-didehydroalanine (Ser)). 4 cross-links (beta-methyllanthionine (Thr-Cys)) span residues 32 to 35 (TPGC), 37 to 43 (TGILMTC), 47 to 50 (TATC), and 49 to 52 (TCGC). Thr-42 carries the 2,3-didehydrobutyrine modification.

Post-translationally, maturation of lantibiotics involves the enzymatic conversion of Thr, and Ser into dehydrated AA and the formation of thioether bonds with cysteine. This is followed by membrane translocation and cleavage of the modified precursor.

Its subcellular location is the secreted. Its function is as follows. Lanthionine-containing peptide antibiotic (lantibiotic) active on Gram-positive bacteria. The bactericidal activity of lantibiotics is based on depolarization of energized bacterial cytoplasmic membranes, initiated by the formation of aqueous transmembrane pores. The sequence is that of Lantibiotic nisin-U (nsuA) from Streptococcus uberis.